A 567-amino-acid chain; its full sequence is MAKVSRQAYAEMFGPTTGDRLRLADTGLMIEVEKDFTVYGEEVKFGGGKVIRDGMGQSQRESKDCADTVITNAVIIDHWGIVKADISIKNGRISNIGKAGNPDIQPGITSVIGPGTEIIAGEGMIVTAGGIDTHIHFICPQQIEEALMSGVTTMIGGGTGPATGTFATTCTPGPWHIQRMLQSIDAYPMNIGLLGKGNASLPGGLREQVDAGAIGLKLHEDWGTTPAAIDCCLGVADDTDTQVAIHTDTLNESGFVETTLAAFKGRTIHTYHTEGAGGGHAPDIIRACGESNVLPSSTNPTRPFTVNTLDEHLDMLMVCHHLDASIAEDIAFAESRIRRETIAAEDILHDLGAFSMLSSDSQAMGRVGEVIIRTWQTADKMKAQRGLLPGDTNRNDNFRVKRYISKYTINPAITHGISHVVGSIEVGKYADLVFWKPAFFGVKPSLILKGGSIAAAAMGDPNASIPTPQPVHYRNMFAGIGQGIRHSSLTFISQSAMNANIRDAYGLEKQVEVVKNCRSITKADMIHNDWQPNITVDPETYQVIANGELLTCEPAKVLPMAQRYFLF.

Histidine 134, histidine 136, and lysine 217 together coordinate Ni(2+). Lysine 217 is modified (N6-carboxylysine). Histidine 219 is a substrate binding site. Ni(2+)-binding residues include histidine 246 and histidine 272. Catalysis depends on histidine 320, which acts as the Proton donor. Aspartate 360 contacts Ni(2+).

Belongs to the metallo-dependent hydrolases superfamily. Urease alpha subunit family. In terms of assembly, heterotrimer of UreA (gamma), UreB (beta) and UreC (alpha) subunits. Three heterotrimers associate to form the active enzyme. Ni cation serves as cofactor. In terms of processing, carboxylation allows a single lysine to coordinate two nickel ions.

Its subcellular location is the cytoplasm. The catalysed reaction is urea + 2 H2O + H(+) = hydrogencarbonate + 2 NH4(+). Its pathway is nitrogen metabolism; urea degradation; CO(2) and NH(3) from urea (urease route): step 1/1. This Polynucleobacter asymbioticus (strain DSM 18221 / CIP 109841 / QLW-P1DMWA-1) (Polynucleobacter necessarius subsp. asymbioticus) protein is Urease subunit alpha.